Here is a 718-residue protein sequence, read N- to C-terminus: Kinesin-2a (718 aa).

Residues Asn5 to Ile335 enclose the Kinesin motor domain. An ATP-binding site is contributed by Gly97 to Thr104. 5 residues coordinate ADP: Gly100, Gly102, Lys103, Thr104, and Trp105. Position 104 (Thr104) interacts with Mg(2+). Residues Ser432–Gln477 are a coiled coil.

This sequence belongs to the TRAFAC class myosin-kinesin ATPase superfamily. Kinesin family. Kinesin II subfamily. As to quaternary structure, monomer.

The protein resides in the cell projection. It localises to the cilium. Its subcellular location is the flagellum. The protein localises to the cytoplasm. It is found in the cytoskeleton. The protein resides in the flagellum axoneme. It localises to the flagellum basal body. Its function is as follows. Involved in anterograde intraflagellar transport (IFT). Involved in flagellar assembly. The polypeptide is Kinesin-2a (Giardia intestinalis (strain ATCC 50803 / WB clone C6) (Giardia lamblia)).